Here is a 146-residue protein sequence, read N- to C-terminus: MORN repeat-containing protein 4 (146 aa).

4 MORN repeats span residues 16-38 (YRGEWKEGRRHGFGQLMFADGGT), 39-61 (YLGHFENGLFNGFGVLTFSDGSR), 62-84 (YEGEFSQGKFNGVGVFIRYDNMT), and 85-107 (FEGEFKNGRVDGFGLLTFPDGSH).

Interacts with MYO3A.

The protein resides in the cytoplasm. It is found in the cell projection. It localises to the filopodium tip. The protein localises to the stereocilium. Its function is as follows. Plays a role in promoting axonal degeneration following neuronal injury by toxic insult or trauma. The protein is MORN repeat-containing protein 4 (Morn4) of Rattus norvegicus (Rat).